Reading from the N-terminus, the 398-residue chain is MSEGNAAGEPSAPGGPRPLLSGARGLIGRRPAPPLTPGRLPSIRSRDLTLGGVKKKTFTPNIISRKIKEEPKEEVTVKKEKRERDRDRQRDSHGRGRGRPEVIQSHSIFEQGPAEMMKKKGNWDKTVDMSDVGPSHIINIKKEKRETDEETKQILRMLEKDDFIDDPGLRNDIRNMPVQLPLAHSGWLFKEENEETDVKPRLAGPKEEDMEVDMPAVKVKEEPRDEDEEAKMKAPLRAARKIPGLPKDVSVAELLRELSLTQEEELLFLQLPDSLPGQPPTQDIKPIKTEVQSEDGQMVVIKQEKDREARLAENTCTLADLTEGQVGKLLIRKSGKVQLLLGKVTLDVTMGTTCSFLQELVSVGLGDSRTGDMTVLGHIKHKLVCSPNFESLLDHRHR.

The tract at residues 1-105 (MSEGNAAGEP…GRGRPEVIQS (105 aa)) is disordered. An N-acetylserine modification is found at Ser-2. A Phosphoserine modification is found at Ser-42. The span at 66 to 100 (KIKEEPKEEVTVKKEKRERDRDRQRDSHGRGRGRP) shows a compositional bias: basic and acidic residues. Residues Lys-68 and Lys-78 each participate in a glycyl lysine isopeptide (Lys-Gly) (interchain with G-Cter in SUMO2) cross-link. 3 positions are modified to omega-N-methylarginine: Arg-95, Arg-97, and Arg-99. Glycyl lysine isopeptide (Lys-Gly) (interchain with G-Cter in SUMO2) cross-links involve residues Lys-141, Lys-152, Lys-160, Lys-190, Lys-199, Lys-206, Lys-220, Lys-285, and Lys-302.

It belongs to the eukaryotic RPC4/POLR3D RNA polymerase subunit family. In terms of assembly, component of the RNA polymerase III complex consisting of 17 subunits: a ten-subunit horseshoe-shaped catalytic core composed of POLR3A/RPC1, POLR3B/RPC2, POLR1C/RPAC1, POLR1D/RPAC2, POLR3K/RPC10, POLR2E/RPABC1, POLR2F/RPABC2, POLR2H/RPABC3, POLR2K/RPABC4 and POLR2L/RPABC5; a mobile stalk composed of two subunits POLR3H/RPC8 and CRCP/RPC9, protruding from the core and functioning primarily in transcription initiation; and additional subunits homologous to general transcription factors of the RNA polymerase II machinery, POLR3C/RPC3-POLR3F/RPC6-POLR3G/RPC7 heterotrimer required for transcription initiation and POLR3D/RPC4-POLR3E/RPC5 heterodimer involved in both transcription initiation and termination. In terms of processing, sumoylation on Lys-141 can serve as a signal to mark misfolded Pol III for proteasomal degradation.

The protein localises to the nucleus. Functionally, DNA-dependent RNA polymerase catalyzes the transcription of DNA into RNA using the four ribonucleoside triphosphates as substrates. Specific peripheric component of RNA polymerase III (Pol III) which synthesizes small non-coding RNAs including 5S rRNA, snRNAs, tRNAs and miRNAs from at least 500 distinct genomic loci. Enables recruitment of Pol III at transcription initiation site and drives transcription initiation from both type 2 and type 3 DNA promoters. Required for efficient transcription termination and reinitiation. Pol III plays a key role in sensing and limiting infection by intracellular bacteria and DNA viruses. Acts as nuclear and cytosolic DNA sensor involved in innate immune response. Can sense non-self dsDNA that serves as template for transcription into dsRNA. The non-self RNA polymerase III transcripts, such as Epstein-Barr virus-encoded RNAs (EBERs) induce type I interferon and NF-kappa-B through the RIG-I pathway. The protein is DNA-directed RNA polymerase III subunit RPC4 (POLR3D) of Bos taurus (Bovine).